The sequence spans 710 residues: Lactotransferrin (710 aa).

The signal sequence occupies residues M1 to A19. F10 bears the Phosphoserine; alternate mark. The O-linked (GlcNAc) serine; alternate glycan is linked to F10. The tract at residues G20–S24 is critical for glycosaminoglycan, lipid A, lysozyme and DNA binding. Bactericidal and antifungal activity regions lie at residues G20–A29 and F39–R49. Residues R21 to R22 form an important for full bactericidal and antifungal activities region. Transferrin-like domains follow at residues V25–K352 and V364–K695. 2 disulfide bridges follow: C28-C64 and C38-C55. 2 interaction with PspA regions span residues F39–R46 and K57–R58. Residues F39 to R49 form an interaction with lipopolysaccharide region. An involved in glycosaminoglycan binding region spans residues R46–P51. D79 serves as a coordination point for Fe(3+). K92 is a catalytic residue. Y111 is a Fe(3+) binding site. 4 cysteine pairs are disulfide-bonded: C134–C217, C176–C192, C189–C200, and C250–C264. Residues T136, R140, A142, and G143 each contribute to the hydrogencarbonate site. N156 is a glycosylation site (N-linked (GlcNAc...) asparagine). Residue Y211 coordinates Fe(3+). H272 contacts Fe(3+). The active-site Nucleophile is the S278. 2 cysteine pairs are disulfide-bonded: C367-C399 and C377-C390. Glycyl lysine isopeptide (Lys-Gly) (interchain with G-Cter in ubiquitin) cross-links involve residues Q379 and S391. D414 and Y454 together coordinate Fe(3+). Disulfide bonds link C424-C705, C446-C668, C478-C553, C502-C696, C512-C526, C523-C536, C594-C608, and C646-C651. Hydrogencarbonate contacts are provided by T480, R484, A486, and G487. A glycan (N-linked (GlcNAc...) asparagine) is linked at N497. Y547 provides a ligand contact to Fe(3+). H616 serves as a coordination point for Fe(3+). The N-linked (GlcNAc...) asparagine glycan is linked to N642.

It belongs to the transferrin family. Monomer. Found in a complex with LTF, CLU, EPPIN and SEMG1. Found in a complex with MPO and LTF; interacts directly with CP, allows Fe(3+) incorporation into LTF and activation of CP ferroxidase activity. Phosphorylation at Ser-10 activates the transcriptional activity. Phosphorylation at Ser-10 also promotes proteasomal degradation. Alternatively can undergo O-GlcNAcylation at Ser-10. Post-translationally, O-GlcNAcylation at Ser-10 inhibits DNA binding and negatively regulates the transcriptional activity. Alternatively can undergo phosphorylation at Ser-10. In terms of processing, poly-N-acetyllactosaminic carbohydrate moiety seems to be needed for TLR4 activation. High levels are found in saliva and tears, intermediate levels in serum and plasma, and low levels in urine. In kidney, detected in the distal collecting tubules in the medulla but not in the cortical region or in blood vessels. Detected in peripheral blood neutrophils (at protein level). Isoform 1 and isoform DeltaLf are expressed in breast, prostate, spleen, pancreas, kidney, small intestine, lung, skeletal muscle, uterus, thymus and fetal liver. Isoform 1 is expressed in brain, testis and peripheral blood leukocytes; isoform DeltaLf is barely detectable in these tissues. Isoform DeltaLf is expressed in placenta, liver and ovary; isoform 1 is barely detectable in these tissues. In kidney, isoform 1 is expressed at high levels in the collecting tubules of the medulla but at very low levels in the cortex.

The protein resides in the secreted. The protein localises to the cytoplasmic granule. Its subcellular location is the cytoplasm. It localises to the nucleus. Its function is as follows. Transferrins are iron binding transport proteins which can bind two Fe(3+) ions in association with the binding of an anion, usually bicarbonate. Major iron-binding and multifunctional protein found in exocrine fluids such as breast milk and mucosal secretions. Has antimicrobial activity, which depends on the extracellular cation concentration. Antimicrobial properties include bacteriostasis, which is related to its ability to sequester free iron and thus inhibit microbial growth, as well as direct bactericidal properties leading to the release of lipopolysaccharides from the bacterial outer membrane. Can also prevent bacterial biofilm development in P.aeruginosa infection. Has weak antifungal activity against C.albicans. Has anabolic, differentiating and anti-apoptotic effects on osteoblasts and can also inhibit osteoclastogenesis, possibly playing a role in the regulation of bone growth. Promotes binding of species C adenoviruses to epithelial cells, promoting adenovirus infection. Can inhibit papillomavirus infections. Stimulates the TLR4 signaling pathway leading to NF-kappa-B activation and subsequent pro-inflammatory cytokine production while also interfering with the lipopolysaccharide (LPS)-stimulated TLR4 signaling. Inhibits neutrophil granulocyte migration to sites of apoptosis, when secreted by apoptotic cells. Stimulates VEGFA-mediated endothelial cell migration and proliferation. Binds heparin, chondroitin sulfate and possibly other glycosaminoglycans (GAGs). Also binds specifically to pneumococcal surface protein A (PspA), the lipid A portion of bacterial lipopolysaccharide (LPS), lysozyme and DNA. In terms of biological role, lactoferricin binds to the bacterial surface and is crucial for the bactericidal functions. Has some antiviral activity against papillomavirus infection. N-terminal region shows strong antifungal activity against C.albicans. Contains two BBXB heparin-binding consensus sequences that appear to form the predominate functional GAG-binding site. Functionally, has antimicrobial activity and is able to permeabilize different ions through liposomal membranes. Its function is as follows. Has opioid antagonist activity. Shows preference for mu-receptor. Has opioid antagonist activity. Shows higher degrees of preference for kappa-receptors than for mu-receptors. In terms of biological role, the lactotransferrin transferrin-like domain 1 functions as a serine protease of the peptidase S60 family that cuts arginine rich regions. This function contributes to the antimicrobial activity. Shows a preferential cleavage at -Arg-Ser-Arg-Arg-|- and -Arg-Arg-Ser-Arg-|-, and of Z-Phe-Arg-|-aminomethylcoumarin sites. Functionally, transcription factor with antiproliferative properties and ability to induce cell cycle arrest. Binds to the DeltaLf response element found in the SKP1, BAX, DCPS, and SELENOH promoters. This chain is Lactotransferrin, found in Homo sapiens (Human).